The chain runs to 158 residues: MSAERASAPVMDVEAIQRILPHRPPFLLVDRVVAVEPGVRLVAWKSVTMNEPFFVGHFPGKPVMPGVLILEALAQACALLAVKSMGPDEDVDEKITYLMSIDGAKFRRPVVPGDRLELHVEVVKRKGAIWRQKGTAIVDGQTVAEADFMAMLADREQE.

Histidine 57 is a catalytic residue.

It belongs to the thioester dehydratase family. FabZ subfamily.

It localises to the cytoplasm. The enzyme catalyses a (3R)-hydroxyacyl-[ACP] = a (2E)-enoyl-[ACP] + H2O. In terms of biological role, involved in unsaturated fatty acids biosynthesis. Catalyzes the dehydration of short chain beta-hydroxyacyl-ACPs and long chain saturated and unsaturated beta-hydroxyacyl-ACPs. The chain is 3-hydroxyacyl-[acyl-carrier-protein] dehydratase FabZ from Anaeromyxobacter sp. (strain Fw109-5).